We begin with the raw amino-acid sequence, 190 residues long: Small ribosomal subunit protein uS5 (190 aa).

The S5 DRBM domain maps to 22–85 (FVDKLVHINR…ESAKRNLTRV (64 aa)).

Belongs to the universal ribosomal protein uS5 family. In terms of assembly, part of the 30S ribosomal subunit. Contacts proteins S4 and S8.

Functionally, with S4 and S12 plays an important role in translational accuracy. Its function is as follows. Located at the back of the 30S subunit body where it stabilizes the conformation of the head with respect to the body. This is Small ribosomal subunit protein uS5 from Rhodopseudomonas palustris (strain BisB18).